The primary structure comprises 338 residues: tRNA-specific 2-thiouridylase MnmA (338 aa).

Residues 6 to 13 (ALSGGVDS) and Met-32 contribute to the ATP site. The Nucleophile role is filled by Cys-92. Cys-92 and Cys-186 are oxidised to a cystine. ATP is bound at residue Gly-116. The segment at 134–136 (KDQ) is interaction with tRNA. Cys-186 functions as the Cysteine persulfide intermediate in the catalytic mechanism. The segment at 288–289 (RY) is interaction with tRNA.

It belongs to the MnmA/TRMU family.

It is found in the cytoplasm. It catalyses the reaction S-sulfanyl-L-cysteinyl-[protein] + uridine(34) in tRNA + AH2 + ATP = 2-thiouridine(34) in tRNA + L-cysteinyl-[protein] + A + AMP + diphosphate + H(+). Its function is as follows. Catalyzes the 2-thiolation of uridine at the wobble position (U34) of tRNA, leading to the formation of s(2)U34. The sequence is that of tRNA-specific 2-thiouridylase MnmA from Campylobacter fetus subsp. fetus (strain 82-40).